The following is a 640-amino-acid chain: Serine/threonine-protein phosphatase with EF-hands 1 (640 aa).

The region spanning 16-45 (VVRAALIIQNWYRRYRARLSARQHYALAIF) is the IQ domain. Residues 122–445 (INLLLQAFKQ…PQFFQYQVTS (324 aa)) form a catalytic region. Mn(2+)-binding residues include Asp173, His175, Asp202, and Asn234. Catalysis depends on His235, which acts as the Proton donor. Mn(2+) is bound by residues His286 and His393. EF-hand domains follow at residues 473–508 (ARKT…ILGL), 556–591 (RYRS…FNAH), and 596–631 (IDDS…VHKY). Residues Asp569, Asp571, Ser573, Glu580, Asp609, Asn611, Asp613, Asn615, and Glu620 each contribute to the Ca(2+) site.

It belongs to the PPP phosphatase family. It depends on Mn(2+) as a cofactor. Mg(2+) is required as a cofactor.

It carries out the reaction O-phospho-L-seryl-[protein] + H2O = L-seryl-[protein] + phosphate. It catalyses the reaction O-phospho-L-threonyl-[protein] + H2O = L-threonyl-[protein] + phosphate. Its activity is regulated as follows. Activated by calcium. Its function is as follows. May have a role in the recovery or adaptation response of photoreceptors. May have a role in development. The protein is Serine/threonine-protein phosphatase with EF-hands 1 (Ppef1) of Rattus norvegicus (Rat).